A 334-amino-acid polypeptide reads, in one-letter code: Ribosomal RNA large subunit methyltransferase F (334 aa).

The disordered stretch occupies residues 1 to 25; sequence MPRPSSPRPDAERKSASPLHPRNRH.

It belongs to the methyltransferase superfamily. METTL16/RlmF family.

It is found in the cytoplasm. It carries out the reaction adenosine(1618) in 23S rRNA + S-adenosyl-L-methionine = N(6)-methyladenosine(1618) in 23S rRNA + S-adenosyl-L-homocysteine + H(+). Functionally, specifically methylates the adenine in position 1618 of 23S rRNA. This Pseudomonas paraeruginosa (strain DSM 24068 / PA7) (Pseudomonas aeruginosa (strain PA7)) protein is Ribosomal RNA large subunit methyltransferase F.